The primary structure comprises 25 residues: GIFSSRKCKTVSKTFRGICTRNANC.

The protein belongs to the DEFL family. Group IV subfamily. In terms of tissue distribution, distributed in the epidermal cell layer of leaves and in the subepidermal layer region of stems. Not in roots.

Its subcellular location is the secreted. The protein localises to the cell wall. Functionally, antimicrobial peptide. Active against Fusarium spp., Gram-positive and Gram-negative bacterial pathogens. This is Defensin D3 from Spinacia oleracea (Spinach).